The sequence spans 155 residues: Troponin C, isoform 3 (155 aa).

EF-hand domains lie at glutamate 11–proline 46, phenylalanine 47–glutamate 82, alanine 87–glutamine 122, and leucine 123–glutamate 155. Residues aspartate 60, aspartate 62, serine 64, arginine 66, and glutamate 71 each contribute to the Ca(2+) site. Ca(2+) is bound by residues aspartate 136, aspartate 138, serine 140, threonine 142, and glutamate 147.

The protein belongs to the troponin C family. As to expression, present in both larval and adult muscles.

This Drosophila melanogaster (Fruit fly) protein is Troponin C, isoform 3 (TpnC73F).